A 563-amino-acid polypeptide reads, in one-letter code: BOS complex subunit NCLN (563 aa).

Positions 1 to 42 (MLEEAGEVLENMLKASCLPLGFIVFLPAVLLLVAPPLPAADA) are cleaved as a signal peptide. Residues 43–522 (AHEFTVYRMQ…VMNAYRVKPA (480 aa)) lie on the Lumenal side of the membrane. 2 N-linked (GlcNAc...) asparagine glycosylation sites follow: Asn241 and Asn428. A helical transmembrane segment spans residues 523 to 543 (VFDLLLAVGIAAYLGMAYVAV). Residues 544-563 (QHFSLLYKTVQRLLVKAKTQ) lie on the Cytoplasmic side of the membrane.

This sequence belongs to the nicastrin family. Component of the back of Sec61 (BOS) complex, composed of NCLN/Nicalin, NOMO (NOMO1, NOMO2 or NOMO3) and TMEM147. The BOS complex is part of the multi-pass translocon (MPT) complex, composed of three subcomplexes, the GEL complex (composed of RAB5IF/OPTI and TMCO1), the BOS complex (composed of NCLN/Nicalin, NOMO and TMEM147) and the PAT complex (composed of WDR83OS/Asterix and CCDC47). The MPT complex associates with the SEC61 complex. As to expression, highly expressed in pancreas and skeletal muscle and, at lower levels, in heart.

It is found in the endoplasmic reticulum membrane. Functionally, component of the multi-pass translocon (MPT) complex that mediates insertion of multi-pass membrane proteins into the lipid bilayer of membranes. The MPT complex takes over after the SEC61 complex: following membrane insertion of the first few transmembrane segments of proteins by the SEC61 complex, the MPT complex occludes the lateral gate of the SEC61 complex to promote insertion of subsequent transmembrane regions. May antagonize Nodal signaling and subsequent organization of axial structures during mesodermal patterning, via its interaction with NOMO. The sequence is that of BOS complex subunit NCLN from Homo sapiens (Human).